A 186-amino-acid polypeptide reads, in one-letter code: Transcription factor FapR (186 aa).

Residues 98–168 enclose the MaoC-like domain; that stretch reads FTKTQIARGH…YVIEVNSYVR (71 aa).

The protein belongs to the FapR family.

Transcriptional factor involved in regulation of membrane lipid biosynthesis by repressing genes involved in fatty acid and phospholipid metabolism. This chain is Transcription factor FapR, found in Staphylococcus haemolyticus (strain JCSC1435).